The primary structure comprises 201 residues: Pyridoxal 5'-phosphate synthase subunit PdxT (201 aa).

50–52 is an L-glutamine binding site; that stretch reads GES. Cys82 acts as the Nucleophile in catalysis. Residues Arg111 and 139-140 contribute to the L-glutamine site; that span reads IR. Catalysis depends on charge relay system residues His180 and Glu182.

This sequence belongs to the glutaminase PdxT/SNO family. As to quaternary structure, in the presence of PdxS, forms a dodecamer of heterodimers. Only shows activity in the heterodimer.

It carries out the reaction aldehydo-D-ribose 5-phosphate + D-glyceraldehyde 3-phosphate + L-glutamine = pyridoxal 5'-phosphate + L-glutamate + phosphate + 3 H2O + H(+). It catalyses the reaction L-glutamine + H2O = L-glutamate + NH4(+). Its pathway is cofactor biosynthesis; pyridoxal 5'-phosphate biosynthesis. Catalyzes the hydrolysis of glutamine to glutamate and ammonia as part of the biosynthesis of pyridoxal 5'-phosphate. The resulting ammonia molecule is channeled to the active site of PdxS. This chain is Pyridoxal 5'-phosphate synthase subunit PdxT, found in Nocardioides sp. (strain ATCC BAA-499 / JS614).